The sequence spans 214 residues: Adenylate kinase (214 aa).

Residue 10–15 (GAGKGT) coordinates ATP. The tract at residues 30 to 59 (STGDMLRAAVKAGTELGKQAKEIMDAGKLV) is NMP. Residues T31, R36, 57–59 (KLV), 85–88 (GFPR), and Q92 each bind AMP. The interval 122–159 (GRRVHAASGRVYHVKFNPPKVEGKDDVTGEDLTIRKDD) is LID. Residues R123 and 132–133 (VY) each bind ATP. Residues R156 and R167 each coordinate AMP. R200 provides a ligand contact to ATP.

Belongs to the adenylate kinase family. Monomer.

The protein resides in the cytoplasm. The catalysed reaction is AMP + ATP = 2 ADP. The protein operates within purine metabolism; AMP biosynthesis via salvage pathway; AMP from ADP: step 1/1. Catalyzes the reversible transfer of the terminal phosphate group between ATP and AMP. Plays an important role in cellular energy homeostasis and in adenine nucleotide metabolism. This chain is Adenylate kinase, found in Pectobacterium carotovorum subsp. carotovorum (strain PC1).